The chain runs to 919 residues: MKVVSNFIFTILLTLNLSAALEVVTSRIDRGGIQGFHGDVKVHSGATWAILGTTLCSFFGGLEVEKGASLFIKSDNGPVLALNVALSTLVRPVINNGVISLNSKSSTSFSNFDIGGSSFTNNGEIYLASSGLVKSTAYLYAREWTNNGLIVAYQNQKAAGNIAFGTAYQTITNNGQICLRHQDFVPATKIKGTGCVTADEDTWIKLGNTILSVEPTHNFYLKDSKSSLIVHAVSSNQTFTVHGFGNGNKLGLTLPLTGNRDHFRFEYYPDTGILQLRAAALPQYFKIGKGYDSKLFRIVNSRGLKNAVTYDGPVPNNEIPAVCLIPCTNGPSAPESESDLNTPTTSSIETSSYSSAATESSVVSESSSAVDSLTSSSLSSKSESSDVVSSTTNIESSSTAIETTMNSESSTDAGSSSISQSESSSTAITSSSETSSSESMSASSTTASNTSIETDSGIVSQSESSSNALSSTEQSITSSPGQSTIYVNSTVTSTITSCDENKCTEDVVTIFTTVPCSTDCVPTTGDIPMSTSYTQRTVTSTITNCDEVSCSQDVVTYTTNVPHTTVDATTTTTTSTGGDNSTGGNESGSNHGSGAGSNEGSQSGPNNGSGSGSEGGSNNGSGSGSDSGSNNGSGSGSNNGSGSGSNNGSGSGSGSTEGSEGGSGSNEGSNHGSNEGSGSGSGSQTGSGSGSNNGSGSGSQSGSGSGSQSGSESGSNSGSNEGSNPGAGNGSNEGSGQGSGNGSEAGSGQGSGPNNGSGSGHNDGSGSGSNQGSNPGAGSGSGSESGSNAGSHSGSNEGAKTDSIEGFHTESKPGFNTGAHTDATVTGNSVANPVTTSTESDTTISVTVSITSYMTGFDGKPKPFTTVDVIPVPHSMPSNTTDSSSSVPTIDTNENGSSIVTGGKSILFGLIVSMVVLFM.

An N-terminal signal peptide occupies residues 1–20 (MKVVSNFIFTILLTLNLSAA). Asn-236 carries N-linked (GlcNAc...) asparagine glycosylation. The tract at residues 332–483 (SAPESESDLN…QSITSSPGQS (152 aa)) is disordered. Over residues 344-392 (TTSSIETSSYSSAATESSVVSESSSAVDSLTSSSLSSKSESSDVVSSTT) the composition is skewed to low complexity. Positions 393–414 (NIESSSTAIETTMNSESSTDAG) are enriched in polar residues. A compositionally biased stretch (low complexity) spans 415–475 (SSSISQSESS…SNALSSTEQS (61 aa)). Residues Asn-449, Asn-488, Asn-580, Asn-585, Asn-607, Asn-619, Asn-631, Asn-639, Asn-647, and Asn-693 are each glycosylated (N-linked (GlcNAc...) asparagine). A compositionally biased stretch (low complexity) spans 567-590 (DATTTTTTSTGGDNSTGGNESGSN). The tract at residues 567–839 (DATTTTTTST…VANPVTTSTE (273 aa)) is disordered. 2 stretches are compositionally biased toward gly residues: residues 607–665 (NGSG…GSGS) and 675–707 (EGSG…GSGS). The segment covering 708–724 (QSGSESGSNSGSNEGSN) has biased composition (low complexity). The segment covering 725–783 (PGAGNGSNEGSGQGSGNGSEAGSGQGSGPNNGSGSGHNDGSGSGSNQGSNPGAGSGSGS) has biased composition (gly residues). N-linked (GlcNAc...) asparagine glycans are attached at residues Asn-729, Asn-741, and Asn-755. The span at 784–798 (ESGSNAGSHSGSNEG) shows a compositional bias: low complexity. The span at 799 to 811 (AKTDSIEGFHTES) shows a compositional bias: basic and acidic residues. Over residues 823–833 (ATVTGNSVANP) the composition is skewed to polar residues. Residues Asn-879 and Asn-895 are each glycosylated (N-linked (GlcNAc...) asparagine). Residue Asn-895 is the site of GPI-anchor amidated asparagine attachment. A propeptide spans 896 to 919 (GSSIVTGGKSILFGLIVSMVVLFM) (removed in mature form).

This sequence belongs to the HYR1/IFF family. In terms of assembly, component of a multiprotein complex of 250 kDa composed of at least HYR1, MP65, and PRA1. In terms of processing, the GPI-anchor is attached to the protein in the endoplasmic reticulum and serves to target the protein to the cell surface. There, the glucosamine-inositol phospholipid moiety is cleaved off and the GPI-modified mannoprotein is covalently attached via its lipidless GPI glycan remnant to the 1,6-beta-glucan of the outer cell wall layer.

It localises to the secreted. Its subcellular location is the cell wall. The protein resides in the membrane. In terms of biological role, GPI-anchored hyphal cell wall protein required for hyphal growth and virulence. Involved in innate immune cell evasion through conferring resistance to neutrophil killing. Binds kininogen, the proteinaceous kinin precursor, and contributes to trigger the kinin-forming cascade on the cell surface. Production of kinins is often involved in the human host defense against microbial infections. This is Hyphally regulated cell wall protein 1 (HYR1) from Candida albicans (strain SC5314 / ATCC MYA-2876) (Yeast).